The primary structure comprises 31 residues: Potassium channel toxin alpha-KTx 19.2 (31 aa).

3 disulfide bridges follow: Cys-3-Cys-22, Cys-8-Cys-27, and Cys-12-Cys-29.

This sequence belongs to the short scorpion toxin superfamily. Potassium channel inhibitor family. Alpha-KTx 19 subfamily. In terms of assembly, monomer. As to expression, expressed by the venom gland.

It is found in the secreted. In terms of biological role, blocks voltage-gated potassium channels rKv1.1/KCNA1, rKv1.2/KCNA2, hKv1.3/KCNA3, rKv1.6/KCNA6 (IC(50)=75.9 nM) and, to a lesser extent, Shaker IR (with the inactivation domain removed). This is Potassium channel toxin alpha-KTx 19.2 from Buthus occitanus tunetanus (Common European scorpion).